Here is a 497-residue protein sequence, read N- to C-terminus: NAD(P)H-quinone oxidoreductase subunit 2, chloroplastic (497 aa).

14 consecutive transmembrane segments (helical) span residues 13–33, 37–57, 76–96, 103–123, 129–149, 164–184, 206–226, 240–260, 274–294, 311–331, 332–352, 373–393, 406–426, and 462–482; these read VILP…LDLI, SAWL…ALVF, FTIS…LIST, GMGL…GLFL, LVTV…LVGY, LLMG…LYGL, IAVW…LSAF, PTPV…ALAT, WHVL…LIAA, AGYL…GMIT, YMVT…LFGL, AFCL…AGFF, GLYL…YYYL, and VGIA…NPII.

It belongs to the complex I subunit 2 family. As to quaternary structure, NDH is composed of at least 16 different subunits, 5 of which are encoded in the nucleus.

The protein resides in the plastid. It is found in the chloroplast thylakoid membrane. It carries out the reaction a plastoquinone + NADH + (n+1) H(+)(in) = a plastoquinol + NAD(+) + n H(+)(out). The catalysed reaction is a plastoquinone + NADPH + (n+1) H(+)(in) = a plastoquinol + NADP(+) + n H(+)(out). Functionally, NDH shuttles electrons from NAD(P)H:plastoquinone, via FMN and iron-sulfur (Fe-S) centers, to quinones in the photosynthetic chain and possibly in a chloroplast respiratory chain. The immediate electron acceptor for the enzyme in this species is believed to be plastoquinone. Couples the redox reaction to proton translocation, and thus conserves the redox energy in a proton gradient. The sequence is that of NAD(P)H-quinone oxidoreductase subunit 2, chloroplastic from Zygnema circumcarinatum (Green alga).